We begin with the raw amino-acid sequence, 31 residues long: Protamine PTP4 (31 aa).

The segment at 1-31 is disordered; it reads MPRRRRASRRIRRRRRPRVSRRRRGGRRRRR.

In terms of tissue distribution, testis.

It localises to the nucleus. The protein resides in the chromosome. Its function is as follows. Protamines substitute for histones in the chromatin of sperm during the haploid phase of spermatogenesis. They compact sperm DNA into a highly condensed, stable and inactive complex. This chain is Protamine PTP4, found in Oncorhynchus mykiss (Rainbow trout).